We begin with the raw amino-acid sequence, 166 residues long: Large ribosomal subunit protein uL10 (166 aa).

Belongs to the universal ribosomal protein uL10 family. As to quaternary structure, part of the ribosomal stalk of the 50S ribosomal subunit. The N-terminus interacts with L11 and the large rRNA to form the base of the stalk. The C-terminus forms an elongated spine to which L12 dimers bind in a sequential fashion forming a multimeric L10(L12)X complex.

Its function is as follows. Forms part of the ribosomal stalk, playing a central role in the interaction of the ribosome with GTP-bound translation factors. The chain is Large ribosomal subunit protein uL10 from Azotobacter vinelandii (strain DJ / ATCC BAA-1303).